A 190-amino-acid polypeptide reads, in one-letter code: Dense granule protein 1 (190 aa).

The signal sequence occupies residues 1-24 (MVRVSAIVGAAASVFVCLSAGAYA). The N-linked (GlcNAc...) asparagine glycan is linked to asparagine 30.

The protein localises to the secreted. In Toxoplasma gondii, this protein is Dense granule protein 1 (GRA1).